The sequence spans 75 residues: uncharacterized protein (75 aa).

The N-terminal stretch at 1-21 (MRLIVVSIMVTLLSGCGSIIS) is a signal peptide.

It to E.coli YidQ.

This is an uncharacterized protein from Escherichia coli O157:H7.